The chain runs to 326 residues: MSRVSEQPVDRITIPLLQRWKQDGRRLVMTTAYDAVAAPIPDPSIDISLVGDSGGNVCLGFENTPPVSVAMMNHHLEAAVRSKPRALLVADMSFLSFHVSVEETIRNAGGFLQRGAAAARLEGGGKRIEMVRAIVDCEIPVMGHLGLVPQSVNVMGGFKVQGRKVDEALRLLDDAHRLQEASCFALVLEGTPAELTARVSDSLTIPTIGIGSGPDCSEQVLCFMTCWAKPKVIAPNSFPPIRKAFSSSMMRFRAGQRMSAVARSPARKSPIGFPKALGRQLPTGRHPPQIITSVAELRRTLAKSRSANQRAGLCRRWAISTMATWR.

The Mg(2+) site is built by D52, D91, and E122. 3-methyl-2-oxobutanoate is bound by residues 52–53 (DS) and D91. Catalysis depends on E189, which acts as the Proton acceptor.

This sequence belongs to the PanB family. As to quaternary structure, homodecamer; pentamer of dimers. Requires Mg(2+) as cofactor.

It is found in the cytoplasm. It carries out the reaction 3-methyl-2-oxobutanoate + (6R)-5,10-methylene-5,6,7,8-tetrahydrofolate + H2O = 2-dehydropantoate + (6S)-5,6,7,8-tetrahydrofolate. It functions in the pathway cofactor biosynthesis; (R)-pantothenate biosynthesis; (R)-pantoate from 3-methyl-2-oxobutanoate: step 1/2. In terms of biological role, catalyzes the reversible reaction in which hydroxymethyl group from 5,10-methylenetetrahydrofolate is transferred onto alpha-ketoisovalerate to form ketopantoate. In Bradyrhizobium diazoefficiens (strain JCM 10833 / BCRC 13528 / IAM 13628 / NBRC 14792 / USDA 110), this protein is 3-methyl-2-oxobutanoate hydroxymethyltransferase 1.